We begin with the raw amino-acid sequence, 2220 residues long: Non-reducing polyketide synthase stbA (2220 aa).

Residues 10–255 (IFSPQNSPPK…HDATNTDMAQ (246 aa)) form an N-terminal acylcarrier protein transacylase domain (SAT) region. The Ketosynthase family 3 (KS3) domain maps to 379–803 (SDAIAVVGAG…GSNSALICSE (425 aa)). Active-site for beta-ketoacyl synthase activity residues include Cys-551, His-687, and His-726. Positions 906-1207 (LAFSGQSRTN…ADATQHTFQA (302 aa)) are malonyl-CoA:ACP transacylase (MAT) domain. Catalysis depends on Ser-993, which acts as the For acyl/malonyl transferase activity. The segment at 1287 to 1414 (EPRAAQLVRY…GDFTMTAGPH (128 aa)) is N-terminal hotdog fold. In terms of domain architecture, PKS/mFAS DH spans 1287–1589 (EPRAAQLVRY…FHKTSMTKLL (303 aa)). The interval 1292–1588 (QLVRYKGALG…HFHKTSMTKL (297 aa)) is product template (PT) domain. The Proton acceptor; for dehydratase activity role is filled by His-1323. The tract at residues 1436–1589 (DAEKLRKRTA…FHKTSMTKLL (154 aa)) is C-terminal hotdog fold. The active-site Proton donor; for dehydratase activity is Asp-1500. Carrier domains are found at residues 1634-1711 (AAGP…SGGA) and 1742-1821 (PAGP…AADV). 2 positions are modified to O-(pantetheine 4'-phosphoryl)serine: Ser-1671 and Ser-1779. The tract at residues 1879-2210 (TRFRMETVVY…YDFIFTELEN (332 aa)) is thioesterase (TE) domain. Residues Ser-1999 and Asp-2148 each act as for thioesterase activity in the active site.

The catalysed reaction is 3 malonyl-CoA + acetyl-CoA + 2 H(+) = orsellinate + 3 CO2 + 4 CoA. The protein operates within secondary metabolite biosynthesis; terpenoid biosynthesis. Non-reducing polyketide synthase; part of the cluster that mediates the biosynthesis of LL-Z1272-beta, also known as ilicicolin B, a prenylated aryl-aldehyde produced by several fungi and that serves as a key pathway intermediate for many fungal meroterpenoids. The first step in the pathway is performed by the non-reducing polyketide synthase stbA that produces orsellinic acid by condensing acetyl-CoA with 3 malonyl-CoA units. The prenyltransferase stbC then prenylates orsenilic acid into grifolic acid. Finally, grifolic acid is reduced to ilicicolin B by the NRPS-like protein stbB. This Stachybotrys bisbyi (Hyalostachybotrys bisbyi) protein is Non-reducing polyketide synthase stbA.